The chain runs to 198 residues: Type 1 fimbriae regulatory protein FimE (198 aa).

The Tyr recombinase domain occupies 2–184 (SKRRYLTGKE…NAARFAGLWE (183 aa)). Catalysis depends on residues Arg41, Lys66, His136, Arg139, and His162. The active-site O-(3'-phospho-DNA)-tyrosine intermediate is the Tyr171.

Belongs to the 'phage' integrase family.

Functionally, fimE is one of the 2 regulatory proteins which control the phase variation of type 1 fimbriae in E.coli. These proteins mediate the periodic inversion of a 300bp DNA segment that harbors the promoter for the fimbrial structural gene, fimA. FimE switches fimA off. The sequence is that of Type 1 fimbriae regulatory protein FimE (fimE) from Escherichia coli O6:H1 (strain CFT073 / ATCC 700928 / UPEC).